Consider the following 471-residue polypeptide: MSIQIFNTLKREKEPFKPLKDGEVKMYVCGPTVYNYIHIGNARPIIVFDTVRRYFTYRGYDVKFVSNFTDVDDKLIRAANELKLTVPEVADRFIGAYFDDVDQLNVAKATVNPRVTENMDEIIQLISTLIEKGYAYESAGDVYFRTKKFKDYGKLSGQELSELQHGARVEYNERKQDELDFTLWKAAKPGEIFWESPFGNGRPGWHIECSALAKKYLGDTIDIHAGGQDLVFPHHEDEIAQSEAATGKTFANYWMHNAFLNIDGEKMSKSLGNFITLHDVLKDNDPNVIRFFMLSVHYRKPITLNDAILEDAKNGLERLMIAYQNIDHRIQTDDGEYVEEAHEDEWLEQLTELKQAFEDDMDDDFNTANAITTFHELAKRANIYLAKETVSINVLREFLSMMRLFAEVLGLKLENTQTDSLDDSEVEALIEERLQARNERNFARADEIRDILKEKNIILEDTAQGTRFRRG.

Position 29 (C29) interacts with Zn(2+). The 'HIGH' region motif lies at 31–41; sequence PTVYNYIHIGN. Residues C209, H234, and E238 each contribute to the Zn(2+) site. The 'KMSKS' region signature appears at 266–270; that stretch reads KMSKS. K269 is a binding site for ATP.

It belongs to the class-I aminoacyl-tRNA synthetase family. As to quaternary structure, monomer. It depends on Zn(2+) as a cofactor.

It is found in the cytoplasm. The catalysed reaction is tRNA(Cys) + L-cysteine + ATP = L-cysteinyl-tRNA(Cys) + AMP + diphosphate. This is Cysteine--tRNA ligase from Listeria monocytogenes serotype 4b (strain CLIP80459).